The sequence spans 318 residues: MSVSVIIKWGGQEYSINTLSEEDTVLDLKQSIKSLTGVLPERQKLLGLKLKGKPADDNVKLGDLKLKPNTKIMMMGTREESLEDVLAPPPENDDVVNDFDIEEEVTEVENREENLAKIARRVKDYKVEELNPPRPGKRLLVLDIDYTLFDHKSCAETGHELMRPFLHEFLTSAYEDFDIVIWSATSMKWIDAKMKELGVTDNPNYKITFMLDSAAMITVHTPKRGVVEVKPLGVIWGKYSEFYNRKNTIMFDDIGRNFLMNPQNGLKIRPFMKAHLNREKDKELYKLSQYLKEIAKLDDFSGLNHKHWERYLSKKQNQ.

In terms of domain architecture, Ubiquitin-like spans 3-81 (VSVIIKWGGQ…IMMMGTREES (79 aa)). The FCP1 homology domain maps to 133-294 (PRPGKRLLVL…YKLSQYLKEI (162 aa)). Residues Asp-143, Asp-145, and Asp-253 each coordinate Mg(2+).

The cofactor is Mg(2+).

The protein resides in the nucleus. The catalysed reaction is O-phospho-L-seryl-[protein] + H2O = L-seryl-[protein] + phosphate. The enzyme catalyses O-phospho-L-threonyl-[protein] + H2O = L-threonyl-[protein] + phosphate. Functionally, dephosphorylates 26S nuclear proteasomes, thereby decreasing their proteolytic activity. Recruited to the 19S regulatory particle of the 26S proteasome where it dephosphorylates 19S component psmc2 which impairs psmc2 ATPase activity and disrupts 26S proteasome assembly. Has also been reported to stimulate the proteolytic activity of the 26S proteasome. This is Ubiquitin-like domain-containing CTD phosphatase 1 (ublcp1) from Danio rerio (Zebrafish).